The sequence spans 57 residues: MAGDQKAKAKMEQAKGKAKAAAGRAVGNERMAAEGQAEKSKGDARQAKEKTKDVFKH.

Basic and acidic residues-rich tracts occupy residues 1-15 and 36-57; these read MAGD…EQAK and QAEK…VFKH. Positions 1–57 are disordered; it reads MAGDQKAKAKMEQAKGKAKAAAGRAVGNERMAAEGQAEKSKGDARQAKEKTKDVFKH.

The protein belongs to the UPF0337 (CsbD) family.

The chain is UPF0337 protein SAV_1088 from Streptomyces avermitilis (strain ATCC 31267 / DSM 46492 / JCM 5070 / NBRC 14893 / NCIMB 12804 / NRRL 8165 / MA-4680).